An 885-amino-acid polypeptide reads, in one-letter code: MLSRLFRMHGLFVASHPWEVIVGTVTLTICMMSMNMFTGNDKICGWNYECPKFEEDVLSSDIIILTITRCIAILYIYFQFQNLRQLGSKYILGIAGLFTIFSSFVFSTVVIHFLDKELTGLNEALPFFLLLIDLSRASALAKFALSSNSQDEVRENIARGMAILGPTFTLDALVECLVIGVGTMSGVRQLEIMCCFGCMSVLATYFVFMTFFPACVSLVLELSRESREGRPIWQLSHFARVLEGEENKPNPVTQRVKIIMSLGLVLVHAHSRWIADPSPQNSTADNSKVSLGLDENVSKRIEPSVSLWQFYLSKMISMDIEQVITLTLALLLAVKYIFFEQAETESTLSLKNPITSPVVTQKKVTDDCCRREPTLVRNDQKFHTVEEEARINRERKVEVIKPLVAETDTSSRPTFVVGNSTLDSSLELEMQEPEIQIPSEPRPNEECLQILGNAEKGAKFLSDAEIIQLVNAKHIPAYKLETLMETHERGVSIRRQLLSKKLPEPSSLQYLPYRDYNYSLVMGACCENVIGYMPIPVGVAGPLCLDGKEFQVPMATTEGCLVASTNRGCRAIGLGGGASSRILADGMTPVVRFPRACDSAEVKAWLETPEGFAVIKEAFDSTSRFARLQKLQMSVAGRNLYIRFQSRSGDAMGMNMISKGTEKALSKLHEYFPEMQILAVSGNYCTDKKPAAVNWIEGRGKSVVCEAVIPAKVVREVLKTTTEAMVEVNINKNLVGSAMAGSIGGYNAHAANIVTAIYIACGQDAAQNVGSSNCITLMEASGPTNEDLYISCTMPSIEIGTVGGGTSLLPQQACLQMLGVQGACKDNPGENARQLARIVCGTVMAGELSLMAALAAGHLVRSHMIHNRSKINLQDLQGTCTKKAA.

The Cytoplasmic portion of the chain corresponds to 1 to 9 (MLSRLFRMH). The chain crosses the membrane as a helical span at residues 10–39 (GLFVASHPWEVIVGTVTLTICMMSMNMFTG). Residues 40–56 (NDKICGWNYECPKFEED) lie on the Lumenal side of the membrane. A helical transmembrane segment spans residues 57 to 78 (VLSSDIIILTITRCIAILYIYF). An SSD domain is found at 61–218 (DIIILTITRC…MTFFPACVSL (158 aa)). Residues 75–78 (YIYF) carry the INSIG-binding motif motif. Residues 79-89 (QFQNLRQLGSK) are Cytoplasmic-facing. Lysine 89 participates in a covalent cross-link: Glycyl lysine isopeptide (Lys-Gly) (interchain with G-Cter in ubiquitin). The chain crosses the membrane as a helical span at residues 90–114 (YILGIAGLFTIFSSFVFSTVVIHFL). At 115–123 (DKELTGLNE) the chain is on the lumenal side. The chain crosses the membrane as a helical span at residues 124 to 149 (ALPFFLLLIDLSRASALAKFALSSNS). Residues 150 to 159 (QDEVRENIAR) are Cytoplasmic-facing. Residues 160 to 187 (GMAILGPTFTLDALVECLVIGVGTMSGV) form a helical membrane-spanning segment. The Lumenal portion of the chain corresponds to 188–191 (RQLE). Residues 192 to 220 (IMCCFGCMSVLATYFVFMTFFPACVSLVL) traverse the membrane as a helical segment. At 221–248 (ELSRESREGRPIWQLSHFARVLEGEENK) the chain is on the cytoplasmic side. Lysine 248 participates in a covalent cross-link: Glycyl lysine isopeptide (Lys-Gly) (interchain with G-Cter in ubiquitin). Residues 249–275 (PNPVTQRVKIIMSLGLVLVHAHSRWIA) traverse the membrane as a helical segment. Residues 276–314 (DPSPQNSTADNSKVSLGLDENVSKRIEPSVSLWQFYLSK) are Lumenal-facing. N-linked (GlcNAc...) asparagine glycans are attached at residues asparagine 281 and asparagine 296. The chain crosses the membrane as a helical span at residues 315–339 (MISMDIEQVITLTLALLLAVKYIFF). Over 340–885 (EQAETESTLS…LQGTCTKKAA (546 aa)) the chain is Cytoplasmic. Catalysis depends on charge relay system residues glutamate 558, lysine 688, and aspartate 764. Catalysis depends on histidine 863, which acts as the Proton donor. A Phosphoserine; by AMPK modification is found at serine 869.

Belongs to the HMG-CoA reductase family. As to quaternary structure, homotetramer. Homodimer. Interacts (via its SSD) with INSIG1; the interaction, accelerated by sterols, leads to the recruitment of HMGCR to AMFR/gp78 for its ubiquitination by the sterol-mediated ERAD pathway. Interacts with UBIAD1. Undergoes sterol-mediated ubiquitination and ER-associated degradation (ERAD). Accumulation of sterols in the endoplasmic reticulum (ER) membrane, triggers binding of the reductase to the ER membrane protein INSIG1 or INSIG2. The INSIG1 binding leads to the recruitment of the ubiquitin ligase, AMFR/gp78, RNF139 or RNF145, initiating ubiquitination of the reductase. The ubiquitinated reductase is then extracted from the ER membrane and delivered to cytosolic 26S proteosomes by a mechanism probably mediated by the ATPase Valosin-containing protein VCP/p97. The INSIG2-binding leads to the recruitment of the ubiquitin ligase RNF139, initiating ubiquitination of the reductase. Lys-248 is the main site of ubiquitination. Ubiquitination is enhanced by the presence of a geranylgeranylated protein. Post-translationally, N-glycosylated. Deglycosylated by NGLY1 on release from the endoplasmic reticulum (ER) in a sterol-mediated manner. In terms of processing, phosphorylated. Phosphorylation at Ser-869 reduces the catalytic activity. In terms of tissue distribution, high expression found in liver, heart, kidney, bladder and subcutaneous fat. Lower levels in lung, uterus and large intestine. Lowest levels in cerebrum, spleen, spinal cord, stomach, ovary, longissimus muscle, and small intestine.

The protein resides in the endoplasmic reticulum membrane. The protein localises to the peroxisome membrane. It catalyses the reaction (R)-mevalonate + 2 NADP(+) + CoA = (3S)-3-hydroxy-3-methylglutaryl-CoA + 2 NADPH + 2 H(+). It functions in the pathway metabolic intermediate biosynthesis; (R)-mevalonate biosynthesis; (R)-mevalonate from acetyl-CoA: step 3/3. Its activity is regulated as follows. Regulated by a negative feedback mechanism through sterols and non-sterol metabolites derived from mevalonate. Phosphorylation at Ser-869 down-regulates the catalytic activity. Catalyzes the conversion of (3S)-hydroxy-3-methylglutaryl-CoA (HMG-CoA) to mevalonic acid, the rate-limiting step in the synthesis of cholesterol and other isoprenoids, thus plays a critical role in cellular cholesterol homeostasis. This Sus scrofa (Pig) protein is 3-hydroxy-3-methylglutaryl-coenzyme A reductase (HMGCR).